Consider the following 120-residue polypeptide: Large ribosomal subunit protein uL18 (120 aa).

Belongs to the universal ribosomal protein uL18 family. Part of the 50S ribosomal subunit; part of the 5S rRNA/L5/L18/L25 subcomplex. Contacts the 5S and 23S rRNAs.

Its function is as follows. This is one of the proteins that bind and probably mediate the attachment of the 5S RNA into the large ribosomal subunit, where it forms part of the central protuberance. The protein is Large ribosomal subunit protein uL18 of Rhizobium johnstonii (strain DSM 114642 / LMG 32736 / 3841) (Rhizobium leguminosarum bv. viciae).